An 831-amino-acid chain; its full sequence is Prolactin receptor (831 aa).

The signal sequence occupies residues 1 to 23 (MKQNLISSVQIILLLPLTTVGLT). Residues 24-438 (SQSFPGKPKI…EIPNDFRVKD (415 aa)) lie on the Extracellular side of the membrane. Fibronectin type-III domains are found at residues 30–128 (KPKI…VQPG), 129–232 (SPVN…SPPE), 233–331 (KPTI…VQPD), and 332–433 (PPAN…IPND). An intrachain disulfide couples Cys36 to Cys46. Asn59 is a glycosylation site (N-linked (GlcNAc...) asparagine). An intrachain disulfide couples Cys75 to Cys86. Asn91, Asn100, Asn112, Asn132, Asn262, Asn303, Asn315, and Asn335 each carry an N-linked (GlcNAc...) asparagine glycan. Residues Asp414 and His416 each contribute to the Zn(2+) site. Positions 419–423 (WSEWS) match the WSXWS motif motif. The chain crosses the membrane as a helical span at residues 439–459 (MIVWIVLGVLSSLICLIMSWT). Over 460 to 831 (MVLKGYRMIT…DPSSFMPSFK (372 aa)) the chain is Cytoplasmic. A Box 1 motif motif is present at residues 471–479 (ILPPVPGPK). 2 disordered regions span residues 527–563 (HQLM…SPSL) and 776–831 (HTPT…PSFK). Residues 545-554 (TLKETDRDSG) are compositionally biased toward basic and acidic residues. Residues 777-803 (TPTSQEEPAKETSQNPQQGQVETNMSY) show a composition bias toward polar residues.

The protein belongs to the type I cytokine receptor family. Type 1 subfamily.

The protein localises to the membrane. This is a receptor for the anterior pituitary hormone prolactin. This Meleagris gallopavo (Wild turkey) protein is Prolactin receptor (PRLR).